The sequence spans 91 residues: Probable insulin-like peptide gamma-type 1 (91 aa).

Positions 1-26 (MSSYRQTLFILIILIVIILFVNEGQG) are cleaved as a signal peptide. 3 disulfide bridges follow: Cys37–Cys66, Cys49–Cys79, and Cys65–Cys70.

This sequence belongs to the insulin family.

The protein resides in the secreted. This Caenorhabditis elegans protein is Probable insulin-like peptide gamma-type 1 (ins-11).